The sequence spans 579 residues: Cytochrome P450 monooxygenase prx9 (579 aa).

A helical membrane pass occupies residues 6 to 25; that stretch reads LPLGSFVGTTLLLFILYKLV. Asn194, Asn292, and Asn390 each carry an N-linked (GlcNAc...) asparagine glycan. Cys512 serves as a coordination point for heme.

Belongs to the cytochrome P450 family. Heme is required as a cofactor.

The protein resides in the membrane. It participates in sesquiterpene biosynthesis. Cytochrome P450 monooxygenase; part of the gene cluster that mediates the biosynthesis of PR-toxin, a bicyclic sesquiterpene belonging to the eremophilane class and acting as a mycotoxin. The first step of the pathway is catalyzed by the aristolochene synthase which performs the cyclization of trans,trans-farnesyl diphosphate (FPP) to the bicyclic sesquiterpene aristolochene. Following the formation of aristolochene, the non-oxygenated aristolochene is converted to the trioxygenated intermediate eremofortin B, via 7-epi-neopetasone. This conversion appears to involve three enzymes, a hydroxysterol oxidase-like enzyme, the quinone-oxidase prx3 that forms the quinone-type-structure in the bicyclic nucleus of aristolochene with the C8-oxo group and the C-3 hydroxyl group, and the P450 monooxygenase prx9 that introduces the epoxide at the double bond between carbons 1 and 2. No monoxy or dioxy-intermediates have been reported to be released to the broth, so these three early oxidative reactions may be coupled together. Eremofortin B is further oxidized by another P450 monooxygenase, that introduces a second epoxide between carbons 7 and 11 prior to acetylation to eremofortin A by the acetyltransferase prx11. The second epoxidation may be performed by a second P450 monooxygenase. After the acetylation step, eremofortin A is converted to eremofortin C and then to PR-toxin. First the conversion of eremofortin A to eremofortin C proceeds by oxidation of the side chain of the molecule at C-12 and is catalyzed by the short-chain oxidoreductase prx1. The cytochrome P450 monooxygenase prx8 also plays a role in this step. The primary alcohol formed at C-12 is finally oxidized by the short-chain alcohol dehydrogenase prx4 that forms PR-toxin. The protein is Cytochrome P450 monooxygenase prx9 of Penicillium rubens (strain ATCC 28089 / DSM 1075 / NRRL 1951 / Wisconsin 54-1255) (Penicillium chrysogenum).